The primary structure comprises 207 residues: N-(5'-phosphoribosyl)anthranilate isomerase (207 aa).

This sequence belongs to the TrpF family.

It catalyses the reaction N-(5-phospho-beta-D-ribosyl)anthranilate = 1-(2-carboxyphenylamino)-1-deoxy-D-ribulose 5-phosphate. It participates in amino-acid biosynthesis; L-tryptophan biosynthesis; L-tryptophan from chorismate: step 3/5. This chain is N-(5'-phosphoribosyl)anthranilate isomerase, found in Legionella pneumophila (strain Corby).